A 202-amino-acid chain; its full sequence is Phospholipase A2 inhibitor gamma subunit A (202 aa).

Residues 1-19 form the signal peptide; that stretch reads MKSLQIICLLFIFVARGSC. Intrachain disulfides connect C22-C47, C25-C32, C40-C68, C74-C95, C96-C101, C119-C144, C137-C166, and C170-C192.

It belongs to the CNF-like-inhibitor family. In terms of assembly, heteromer composed of subunit A and subunit B. Expressed by the liver.

The protein localises to the secreted. Functionally, inhibits the enzymatic activity of the phospholipase A2 (PLA2). The sequence is that of Phospholipase A2 inhibitor gamma subunit A from Elaphe climacophora (Japanese rat snake).